Reading from the N-terminus, the 339-residue chain is Alcohol dehydrogenase notN (339 aa).

Residues Cys44, His65, Glu66, Cys99, Cys102, Cys110, and Cys152 each coordinate Zn(2+). Residue His65 participates in an alcohol binding. NAD(+) contacts are provided by residues 176–181 (GLGGLG), 196–201 (VAISRG), Lys204, 263–265 (LSF), 287–289 (PSG), and 295–297 (EDA).

Belongs to the zinc-containing alcohol dehydrogenase family. The cofactor is Zn(2+).

It catalyses the reaction a primary alcohol + NAD(+) = an aldehyde + NADH + H(+). The enzyme catalyses a secondary alcohol + NAD(+) = a ketone + NADH + H(+). Alcohol dehydrogenase; part of the gene cluster that mediates the biosynthesis of notoamide, a fungal indole alkaloid that belongs to a family of natural products containing a characteristic bicyclo[2.2.2]diazaoctane core. The first step of notoamide biosynthesis involves coupling of L-proline and L-tryptophan by the bimodular NRPS notE, to produce cyclo-L-tryptophan-L-proline called brevianamide F. The reverse prenyltransferase notF then acts as a deoxybrevianamide E synthase and converts brevianamide F to deoxybrevianamide E via reverse prenylation at C-2 of the indole ring leading to the bicyclo[2.2.2]diazaoctane core. Deoxybrevianamide E is further hydroxylated at C-6 of the indole ring, likely catalyzed by the cytochrome P450 monooxygenase notG, to yield 6-hydroxy-deoxybrevianamide E. 6-hydroxy-deoxybrevianamide E is a specific substrate of the prenyltransferase notC for normal prenylation at C-7 to produce 6-hydroxy-7-prenyl-deoxybrevianamide, also called notoamide S. As the proposed pivotal branching point in notoamide biosynthesis, notoamide S can be diverted to notoamide E through an oxidative pyran ring closure putatively catalyzed by either notH cytochrome P450 monooxygenase or the notD FAD-linked oxidoreductase. This step would be followed by an indole 2,3-epoxidation-initiated pinacol-like rearrangement catalyzed by the notB FAD-dependent monooxygenase leading to the formation of notoamide C and notoamide D. On the other hand notoamide S is converted to notoamide T by notH (or notD), a bifunctional oxidase that also functions as the intramolecular Diels-Alderase responsible for generation of (+)-notoamide T. To generate antipodal (-)-notoaminide T, notH' (or notD') in Aspergillus versicolor is expected to catalyze a Diels-Alder reaction leading to the opposite stereochemistry. The remaining oxidoreductase notD (or notH) likely catalyzes the oxidative pyran ring formation to yield (+)-stephacidin A. The FAD-dependent monooxygenase notI is highly similar to notB and is predicted to catalyze a similar conversion from (+)-stephacidin A to (-)-notoamide B via the 2,3-epoxidation of (+)-stephacidin A followed by a pinacol-type rearrangement. Finally, it remains unclear which enzyme could be responsible for the final hydroxylation steps leading to notoamide A and sclerotiamide. The function of notN in the notoamide biosynthesis has not been determined yet. In Aspergillus sp. (strain MF297-2), this protein is Alcohol dehydrogenase notN.